We begin with the raw amino-acid sequence, 340 residues long: uncharacterized protein (340 aa).

An RING-CH-type zinc finger spans residues 6–70; that stretch reads KYEKSSARCW…PQCLTAYRIA (65 aa). Zn(2+) contacts are provided by C14, C17, C37, C39, H44, C47, C60, and C63. 3 helical membrane passes run 249-269, 274-294, and 300-320; these read EFWI…TKIL, PILL…GNFT, and IIGA…FIAW.

The protein localises to the membrane. This is an uncharacterized protein from Schizosaccharomyces pombe (strain 972 / ATCC 24843) (Fission yeast).